The chain runs to 370 residues: F-box protein At1g66490 (370 aa).

In terms of domain architecture, F-box spans 1 to 46; it reads MRTISDLPVALVEEILSRVPLTSLSAVRSTCKTWNALSKTQIFGKT.

In Arabidopsis thaliana (Mouse-ear cress), this protein is F-box protein At1g66490.